The primary structure comprises 90 residues: DNA-binding protein HU-alpha (90 aa).

The protein belongs to the bacterial histone-like protein family. In terms of assembly, heterodimer of an alpha and a beta chain.

Functionally, histone-like DNA-binding protein which is capable of wrapping DNA to stabilize it, and thus to prevent its denaturation under extreme environmental conditions. This chain is DNA-binding protein HU-alpha (hupA), found in Vibrio proteolyticus (Aeromonas proteolytica).